A 181-amino-acid polypeptide reads, in one-letter code: MFGLKQFYQNEVRAKLAQELDIKNPMLLPKLEKIVISVGAGAHAKDMKIMQNIAQTISLIAGQKAVITKAKKSVAGFKIREGMAVGAKVTLRNKRMYNFLEKLIVISLPRVKDFRGISRNGFDGRGNYTFGINEQLIFPEVVYDDIMVSHGMNITMVTSTDSDKEAFKLLELLGLPFAKVR.

It belongs to the universal ribosomal protein uL5 family. In terms of assembly, part of the 50S ribosomal subunit; part of the 5S rRNA/L5/L18/L25 subcomplex. Contacts the 5S rRNA and the P site tRNA. Forms a bridge to the 30S subunit in the 70S ribosome.

In terms of biological role, this is one of the proteins that bind and probably mediate the attachment of the 5S RNA into the large ribosomal subunit, where it forms part of the central protuberance. In the 70S ribosome it contacts protein S13 of the 30S subunit (bridge B1b), connecting the 2 subunits; this bridge is implicated in subunit movement. Contacts the P site tRNA; the 5S rRNA and some of its associated proteins might help stabilize positioning of ribosome-bound tRNAs. The protein is Large ribosomal subunit protein uL5 of Helicobacter pylori (strain Shi470).